Consider the following 129-residue polypeptide: Small ribosomal subunit protein uS11 (129 aa).

The protein belongs to the universal ribosomal protein uS11 family. In terms of assembly, part of the 30S ribosomal subunit. Interacts with proteins S7 and S18. Binds to IF-3.

Functionally, located on the platform of the 30S subunit, it bridges several disparate RNA helices of the 16S rRNA. Forms part of the Shine-Dalgarno cleft in the 70S ribosome. The sequence is that of Small ribosomal subunit protein uS11 from Staphylococcus haemolyticus (strain JCSC1435).